Here is a 90-residue protein sequence, read N- to C-terminus: Neurotoxin LmNaTx19 (90 aa).

An N-terminal signal peptide occupies residues 1 to 19 (MNHLILIVAMCLMVIGVQC). One can recognise an LCN-type CS-alpha/beta domain in the interval 21 to 80 (KDGYLYDDVDCKFSCWDNEYCRKLCKSKKAVGGYCWRWRFSCYCTGLPDNEKTEGTYKCG). 4 cysteine pairs are disulfide-bonded: C31–C79, C35–C55, C41–C62, and C45–C64.

This sequence belongs to the long (4 C-C) scorpion toxin superfamily. Sodium channel inhibitor family. Alpha subfamily. Expressed by the venom gland.

Its subcellular location is the secreted. Functionally, binds voltage-independently at site-3 of voltage-gated sodium channels (Nav) and inhibits the inactivation of the activated channels, thereby blocking neuronal transmission. The protein is Neurotoxin LmNaTx19 of Lychas mucronatus (Chinese swimming scorpion).